We begin with the raw amino-acid sequence, 563 residues long: F-box/kelch-repeat protein At5g42360 (563 aa).

The F-box domain maps to 129–175 (YRKHVYLPDDILEMCLMRLPLTSLLNAHLVCKKWQSMANTQRFLQMR). Kelch repeat units lie at residues 184 to 231 (WLFL…SIHE), 232 to 282 (EIYI…ATEV), and 355 to 402 (VLIA…IICN).

In Arabidopsis thaliana (Mouse-ear cress), this protein is F-box/kelch-repeat protein At5g42360.